A 116-amino-acid chain; its full sequence is Large ribosomal subunit protein bL17 (116 aa).

It belongs to the bacterial ribosomal protein bL17 family. As to quaternary structure, part of the 50S ribosomal subunit. Contacts protein L32.

This is Large ribosomal subunit protein bL17 from Rippkaea orientalis (strain PCC 8801 / RF-1) (Cyanothece sp. (strain PCC 8801)).